The following is a 171-amino-acid chain: 3-hydroxydecanoyl-[acyl-carrier-protein] dehydratase (171 aa).

The active site involves histidine 70.

It belongs to the thioester dehydratase family. FabA subfamily. In terms of assembly, homodimer.

It is found in the cytoplasm. The catalysed reaction is a (3R)-hydroxyacyl-[ACP] = a (2E)-enoyl-[ACP] + H2O. The enzyme catalyses (3R)-hydroxydecanoyl-[ACP] = (2E)-decenoyl-[ACP] + H2O. It catalyses the reaction (2E)-decenoyl-[ACP] = (3Z)-decenoyl-[ACP]. Its pathway is lipid metabolism; fatty acid biosynthesis. Its function is as follows. Necessary for the introduction of cis unsaturation into fatty acids. Catalyzes the dehydration of (3R)-3-hydroxydecanoyl-ACP to E-(2)-decenoyl-ACP and then its isomerization to Z-(3)-decenoyl-ACP. Can catalyze the dehydratase reaction for beta-hydroxyacyl-ACPs with saturated chain lengths up to 16:0, being most active on intermediate chain length. This is 3-hydroxydecanoyl-[acyl-carrier-protein] dehydratase from Pseudomonas fluorescens (strain SBW25).